Here is a 466-residue protein sequence, read N- to C-terminus: Asparagine--tRNA ligase (466 aa).

This sequence belongs to the class-II aminoacyl-tRNA synthetase family. In terms of assembly, homodimer.

It localises to the cytoplasm. The catalysed reaction is tRNA(Asn) + L-asparagine + ATP = L-asparaginyl-tRNA(Asn) + AMP + diphosphate + H(+). The protein is Asparagine--tRNA ligase of Escherichia coli O157:H7.